The following is a 351-amino-acid chain: Anthranilate phosphoribosyltransferase (351 aa).

Residues Gly-90, Gly-93–Asp-94, Thr-98, Asn-100–Thr-103, Lys-118–Gly-126, and Ser-130 each bind 5-phospho-alpha-D-ribose 1-diphosphate. Gly-90 provides a ligand contact to anthranilate. Ser-102 contacts Mg(2+). Asn-121 contributes to the anthranilate binding site. Arg-176 contacts anthranilate. Positions 235 and 236 each coordinate Mg(2+).

Belongs to the anthranilate phosphoribosyltransferase family. Homodimer. Requires Mg(2+) as cofactor.

The catalysed reaction is N-(5-phospho-beta-D-ribosyl)anthranilate + diphosphate = 5-phospho-alpha-D-ribose 1-diphosphate + anthranilate. Its pathway is amino-acid biosynthesis; L-tryptophan biosynthesis; L-tryptophan from chorismate: step 2/5. Its function is as follows. Catalyzes the transfer of the phosphoribosyl group of 5-phosphorylribose-1-pyrophosphate (PRPP) to anthranilate to yield N-(5'-phosphoribosyl)-anthranilate (PRA). The polypeptide is Anthranilate phosphoribosyltransferase (Prochlorococcus marinus (strain MIT 9313)).